We begin with the raw amino-acid sequence, 271 residues long: Ribosomal RNA small subunit methyltransferase A (271 aa).

S-adenosyl-L-methionine contacts are provided by leucine 20, glycine 45, glutamate 66, aspartate 90, and asparagine 112.

This sequence belongs to the class I-like SAM-binding methyltransferase superfamily. rRNA adenine N(6)-methyltransferase family. RsmA subfamily.

It localises to the cytoplasm. It catalyses the reaction adenosine(1518)/adenosine(1519) in 16S rRNA + 4 S-adenosyl-L-methionine = N(6)-dimethyladenosine(1518)/N(6)-dimethyladenosine(1519) in 16S rRNA + 4 S-adenosyl-L-homocysteine + 4 H(+). Specifically dimethylates two adjacent adenosines (A1518 and A1519) in the loop of a conserved hairpin near the 3'-end of 16S rRNA in the 30S particle. May play a critical role in biogenesis of 30S subunits. This chain is Ribosomal RNA small subunit methyltransferase A, found in Blochmanniella floridana.